A 163-amino-acid chain; its full sequence is Nucleotide-binding protein RHA1_ro01989 (163 aa).

It belongs to the YajQ family.

Functionally, nucleotide-binding protein. The protein is Nucleotide-binding protein RHA1_ro01989 of Rhodococcus jostii (strain RHA1).